The primary structure comprises 340 residues: Ephrin-B3 (340 aa).

The first 27 residues, 1 to 27 (MGPPHSGPGGVRVGALLLLGVLGLVSG), serve as a signal peptide directing secretion. One can recognise an Ephrin RBD domain in the interval 28–167 (LSLEPVYWNS…TRGMKVLLRV (140 aa)). At 28–226 (LSLEPVYWNS…EGPLPPPSMP (199 aa)) the chain is on the extracellular side. 2 disulfide bridges follow: Cys62–Cys104 and Cys92–Cys156. The interval 168-225 (GQSPRGGAVPRKPVSEMPMERDRGAAHSLEPGKENLPGDPTSNATSRGAEGPLPPPSM) is disordered. Basic and acidic residues predominate over residues 185 to 200 (PMERDRGAAHSLEPGK). An N-linked (GlcNAc...) asparagine glycan is attached at Asn210. A helical transmembrane segment spans residues 227–247 (AVAGAAGGLALLLLGVAGAGG). The Cytoplasmic segment spans residues 248–340 (AMCWRRRRAK…QSPPNIYYKV (93 aa)). Residues 254–298 (RRAKPSESRHPGPGSFGRGGSLGLGGGGGMGPREAEPGELGIALR) form a disordered region. Residues 267–284 (GSFGRGGSLGLGGGGGMG) show a composition bias toward gly residues. Arg271 bears the Omega-N-methylarginine mark. The residue at position 274 (Ser274) is a Phosphoserine. The PDZ-binding signature appears at 338-340 (YKV).

The protein belongs to the ephrin family. As to quaternary structure, interacts with GRIP1 and GRIP2. (Microbial infection) Interacts with nipah virus and hendra virus glycoprotein. As to expression, highly expressed in brain; expressed in embryonic floor plate, roof plate and hindbrain segments.

The protein resides in the membrane. Functionally, cell surface transmembrane ligand for Eph receptors, a family of receptor tyrosine kinases which are crucial for migration, repulsion and adhesion during neuronal, vascular and epithelial development. Binds promiscuously Eph receptors residing on adjacent cells, leading to contact-dependent bidirectional signaling into neighboring cells. The signaling pathway downstream of the receptor is referred to as forward signaling while the signaling pathway downstream of the ephrin ligand is referred to as reverse signaling. May play a pivotal role in forebrain function. Binds to, and induce the collapse of, commissural axons/growth cones in vitro. May play a role in constraining the orientation of longitudinally projecting axons. In terms of biological role, (Microbial infection) Acts as a receptor for nipah virus and hendra virus. In Homo sapiens (Human), this protein is Ephrin-B3 (EFNB3).